Here is a 137-residue protein sequence, read N- to C-terminus: Small ribosomal subunit protein uS12 (137 aa).

Residues 1 to 57 (MPTINQLVRKPRKSKTKQSDSPVLNRGFNSKKKQFTNLNSPQKRGVCTRVGTMTPRK) are disordered. 3-methylthioaspartic acid is present on Asp-102. The tract at residues 118-137 (SGVDGRRQGRSLYGTKKPKN) is disordered.

It belongs to the universal ribosomal protein uS12 family. Part of the 30S ribosomal subunit. Contacts proteins S8 and S17. May interact with IF1 in the 30S initiation complex.

In terms of biological role, with S4 and S5 plays an important role in translational accuracy. Interacts with and stabilizes bases of the 16S rRNA that are involved in tRNA selection in the A site and with the mRNA backbone. Located at the interface of the 30S and 50S subunits, it traverses the body of the 30S subunit contacting proteins on the other side and probably holding the rRNA structure together. The combined cluster of proteins S8, S12 and S17 appears to hold together the shoulder and platform of the 30S subunit. The polypeptide is Small ribosomal subunit protein uS12 (Staphylococcus epidermidis (strain ATCC 12228 / FDA PCI 1200)).